Here is a 282-residue protein sequence, read N- to C-terminus: 2,3,4,5-tetrahydropyridine-2,6-dicarboxylate N-succinyltransferase (282 aa).

Substrate-binding residues include Arg109 and Asp146.

It belongs to the transferase hexapeptide repeat family. Homotrimer.

The protein localises to the cytoplasm. The catalysed reaction is (S)-2,3,4,5-tetrahydrodipicolinate + succinyl-CoA + H2O = (S)-2-succinylamino-6-oxoheptanedioate + CoA. It functions in the pathway amino-acid biosynthesis; L-lysine biosynthesis via DAP pathway; LL-2,6-diaminopimelate from (S)-tetrahydrodipicolinate (succinylase route): step 1/3. This is 2,3,4,5-tetrahydropyridine-2,6-dicarboxylate N-succinyltransferase from Bartonella henselae (strain ATCC 49882 / DSM 28221 / CCUG 30454 / Houston 1) (Rochalimaea henselae).